Here is a 317-residue protein sequence, read N- to C-terminus: Olfactory receptor 10A5 (317 aa).

Residues 1 to 26 (MAIGNWTEISEFILMSFSSLPTEIQS) lie on the Extracellular side of the membrane. Residue Asn-5 is glycosylated (N-linked (GlcNAc...) asparagine). Residues 27–47 (LLFLTFLTIYLVTLKGNSLII) traverse the membrane as a helical segment. Topologically, residues 48 to 55 (LVTLADPM) are cytoplasmic. A helical transmembrane segment spans residues 56–76 (LHSPMYFFLRNLSFLEIGFNL). Over 77–100 (VIVPKMLGTLLAQDTTISFLGCAT) the chain is Extracellular. An intrachain disulfide couples Cys-98 to Cys-190. Residues 101–121 (QMYFFFFFGVAECFLLATMAY) form a helical membrane-spanning segment. Topologically, residues 122–140 (DRYVAICSPLHYPVIMNQR) are cytoplasmic. Residues 141–161 (TRAKLAAASWFPGFPVATVQT) form a helical membrane-spanning segment. Over 162–198 (TWLFSFPFCGTNKVNHFFCDSPPVLKLVCADTALFEI) the chain is Extracellular. A helical membrane pass occupies residues 199–218 (YAIVGTILVVMIPCLLILCS). The Cytoplasmic portion of the chain corresponds to 219 to 238 (YTRIAAAILKIPSAKGKHKA). A helical membrane pass occupies residues 239-259 (FSTCSSHLLVVSLFYISSSLT). The Extracellular portion of the chain corresponds to 260 to 272 (YFWPKSNNSPESK). The chain crosses the membrane as a helical span at residues 273-293 (KLLSLSYTVVTPMLNPIIYSL). The Cytoplasmic segment spans residues 294–317 (RNSEVKNALSRTFHKVLALRNCIP).

It belongs to the G-protein coupled receptor 1 family. As to expression, expressed in the tongue.

The protein localises to the cell membrane. Functionally, odorant receptor (Potential). May be involved in taste perception. The sequence is that of Olfactory receptor 10A5 (OR10A5) from Homo sapiens (Human).